The primary structure comprises 438 residues: Enolase (438 aa).

Position 174 (glutamine 174) interacts with (2R)-2-phosphoglycerate. Glutamate 216 serves as the catalytic Proton donor. Positions 253, 297, and 324 each coordinate Mg(2+). Lysine 349, arginine 378, serine 379, and lysine 400 together coordinate (2R)-2-phosphoglycerate. Lysine 349 serves as the catalytic Proton acceptor.

It belongs to the enolase family. In terms of assembly, component of the RNA degradosome, a multiprotein complex involved in RNA processing and mRNA degradation. Requires Mg(2+) as cofactor.

The protein localises to the cytoplasm. It localises to the secreted. The protein resides in the cell surface. The catalysed reaction is (2R)-2-phosphoglycerate = phosphoenolpyruvate + H2O. The protein operates within carbohydrate degradation; glycolysis; pyruvate from D-glyceraldehyde 3-phosphate: step 4/5. Its function is as follows. Catalyzes the reversible conversion of 2-phosphoglycerate (2-PG) into phosphoenolpyruvate (PEP). It is essential for the degradation of carbohydrates via glycolysis. The protein is Enolase of Psychrobacter cryohalolentis (strain ATCC BAA-1226 / DSM 17306 / VKM B-2378 / K5).